We begin with the raw amino-acid sequence, 943 residues long: Isoleucine--tRNA ligase (943 aa).

The short motif at 58–68 (PYANGSIHIGH) is the 'HIGH' region element. An L-isoleucyl-5'-AMP-binding site is contributed by E567. A 'KMSKS' region motif is present at residues 608–612 (KMSKS). K611 provides a ligand contact to ATP. 4 residues coordinate Zn(2+): C906, C909, C926, and C929.

It belongs to the class-I aminoacyl-tRNA synthetase family. IleS type 1 subfamily. In terms of assembly, monomer. The cofactor is Zn(2+).

It localises to the cytoplasm. The catalysed reaction is tRNA(Ile) + L-isoleucine + ATP = L-isoleucyl-tRNA(Ile) + AMP + diphosphate. Functionally, catalyzes the attachment of isoleucine to tRNA(Ile). As IleRS can inadvertently accommodate and process structurally similar amino acids such as valine, to avoid such errors it has two additional distinct tRNA(Ile)-dependent editing activities. One activity is designated as 'pretransfer' editing and involves the hydrolysis of activated Val-AMP. The other activity is designated 'posttransfer' editing and involves deacylation of mischarged Val-tRNA(Ile). The protein is Isoleucine--tRNA ligase of Pseudomonas aeruginosa (strain LESB58).